Here is a 92-residue protein sequence, read N- to C-terminus: Small ribosomal subunit protein uS19 (92 aa).

Belongs to the universal ribosomal protein uS19 family.

In terms of biological role, protein S19 forms a complex with S13 that binds strongly to the 16S ribosomal RNA. This chain is Small ribosomal subunit protein uS19, found in Proteus mirabilis (strain HI4320).